The primary structure comprises 585 residues: Probable long-chain-fatty-acid--AMP ligase FadD30 (585 aa).

This sequence belongs to the ATP-dependent AMP-binding enzyme family.

It participates in lipid metabolism; fatty acid biosynthesis. In terms of biological role, catalyzes the activation of long-chain fatty acids as acyl-adenylates (acyl-AMP), which are then transferred to a multifunctional polyketide synthase (PKS) for further chain extension. This Mycobacterium tuberculosis (strain CDC 1551 / Oshkosh) protein is Probable long-chain-fatty-acid--AMP ligase FadD30 (fadD30).